The primary structure comprises 359 residues: MALVPLRLLLDHAAENGYGIPAFNVNNLEQIQAILKAAVETDSPVILQASRGARAYAGENFLRHLILAAVETYPHIPIVMHQDHGNAPATCYSAIKNNFTSVMMDGSLEADAKTPASFEYNVNVTREVVNVAHALGVSVEGELGCLGSLETGAGEAEDGHGFEGTLDHSQLLTDPDEAVEFVEATQVDALAVAIGTSHGAYKFTRKPTGEILAISRIEEIHRRLPNTHLVMHGSSSVPEDLLALINQYGGAIPETYGVPVEEIQKGIKSGVRKVNIDTDNRLAITAAVREACAKKPEEFDPRHFLKPSITYMQKVCAERYQQFGTAGNASKIKQISLEDFAAKYAKGELNVVTKAAAKV.

Residue Ser50 coordinates D-glyceraldehyde 3-phosphate. Asp83 functions as the Proton donor in the catalytic mechanism. 4 residues coordinate Zn(2+): His84, Asp105, Glu142, and His198. Residue Gly199 participates in dihydroxyacetone phosphate binding. His232 contributes to the Zn(2+) binding site. Residues Gly233–Ser235 and Asn275–Thr278 each bind dihydroxyacetone phosphate.

It belongs to the class II fructose-bisphosphate aldolase family. It depends on Zn(2+) as a cofactor.

It catalyses the reaction beta-D-fructose 1,6-bisphosphate = D-glyceraldehyde 3-phosphate + dihydroxyacetone phosphate. Its pathway is carbohydrate degradation; glycolysis; D-glyceraldehyde 3-phosphate and glycerone phosphate from D-glucose: step 4/4. Catalyzes the aldol condensation of dihydroxyacetone phosphate (DHAP or glycerone-phosphate) with glyceraldehyde 3-phosphate (G3P) to form fructose 1,6-bisphosphate (FBP) in gluconeogenesis and the reverse reaction in glycolysis. The protein is Fructose-bisphosphate aldolase (fba) of Nostoc commune.